The sequence spans 329 residues: Two pore potassium channel protein sup-9 (329 aa).

Residues 1 to 8 (MKRQNIRT) are Cytoplasmic-facing. A helical transmembrane segment spans residues 9–29 (LSLIVCTLTYLLVGAAVFDAL). An N-linked (GlcNAc...) asparagine glycan is attached at asparagine 53. The segment at residues 80–100 (FSGAFYFATTVITTIGYGHST) is an intramembrane region (pore-forming). Positions 93–98 (TIGYGH) match the Selectivity filter motif. A helical membrane pass occupies residues 108–128 (VFCMLYALAGIPLGLIMFQSI). Topologically, residues 129-157 (GERMNTFAAKLLRFIRRAAGKQPIVTSSD) are cytoplasmic. The helical transmembrane segment at 158-178 (LIIFCTGWGGLLIFGGAFMFS) threads the bilayer. An N-linked (GlcNAc...) asparagine glycan is attached at asparagine 182. Residues 186–206 (FDAVYYCFVTLTTIGFGDYVA) constitute an intramembrane region (pore-forming). A Selectivity filter motif is present at residues 198–203 (TIGFGD). The chain crosses the membrane as a helical span at residues 220–240 (VFFSLVFILFGLTVISAAMNL). At 241–329 (LVLRFLTMNT…FSGMTTRPKY (89 aa)) the chain is on the cytoplasmic side. The tract at residues 289–296 (SLASCSCY) is may be important for regulation by and/or interaction with sup-10. Positions 307–329 (HRKHTEPHGGPPTFSGMTTRPKY) are disordered.

The protein belongs to the two pore domain potassium channel (TC 1.A.1.8) family. May form a complex with the regulatory subunits unc-93 and sup-10. Low levels along surface of body-wall muscle cells, in vulval and intestinal muscles and, more weakly, in anal depressor and sphincter muscles. Also expressed in a subset of head neurons.

The protein localises to the membrane. In terms of biological role, potassium channel involved in coordination of muscle contraction. Activity is regulated by sup-18. This is Two pore potassium channel protein sup-9 from Caenorhabditis elegans.